A 2177-amino-acid chain; its full sequence is Brefeldin A-inhibited guanine nucleotide-exchange protein 3 (2177 aa).

Residues 282 to 295 are compositionally biased toward low complexity; that stretch reads TSSTSTSLESDSAS. Positions 282–301 are disordered; the sequence is TSSTSTSLESDSASPGVSDH. Serine 471 is modified (phosphoserine). Residues 511–524 show a composition bias toward polar residues; the sequence is TGQTTLEGELGQTT. 3 disordered regions span residues 511–542, 617–636, and 1031–1076; these read TGQT…PAIP, AAEK…DNCS, and DGAS…LSTA. Residues 583-796 enclose the SEC7 domain; it reads RTRSYGSRYS…EELYHQVLDR (214 aa). Residues 618 to 627 show a composition bias toward basic and acidic residues; it reads AEKDSGRSDV. A phosphoserine mark is found at serine 632 and serine 636. Residues 1032 to 1047 are compositionally biased toward polar residues; the sequence is GASQPPLTISQPQKAT. Serine 1049 carries the post-translational modification Phosphoserine. The chain crosses the membrane as a helical span at residues 1492–1512; that stretch reads GPGFGIYAVVHLLLPVMSVWL. 3 disordered regions span residues 1848 to 1877, 1946 to 2004, and 2033 to 2064; these read STDS…GKEK, ESST…RKKE, and KQQH…SPLL. The span at 1960-1974 shows a compositional bias: basic and acidic residues; that stretch reads TPSEDDRSQSREHMG. Serine 1991 carries the phosphoserine modification. Basic and acidic residues-rich tracts occupy residues 1993–2004 and 2043–2052; these read KVEKKDPSRKKE and KEVKVEKKGE. 5 positions are modified to phosphoserine: serine 2079, serine 2081, serine 2095, serine 2101, and serine 2103. Positions 2082–2103 are disordered; the sequence is AGPELLRQDKRPRSGSTGSSLS.

Interacts with PHB2. Expressed in breast cancer cell lines. Not expressed in normal tissues such as duct, mammary gland, lung, heart, liver, kidnay, bone marrow.

The protein resides in the cytoplasm. The protein localises to the cytoplasmic vesicle. Its subcellular location is the secretory vesicle. It is found in the secretory vesicle membrane. Functionally, participates in the regulation of systemic glucose homeostasis, where it negatively regulates insulin granule biogenesis in pancreatic islet beta cells. Also regulates glucagon granule production in pancreatic alpha cells. Inhibits nuclear translocation of the transcriptional coregulator PHB2 and may enhance estrogen receptor alpha (ESR1) transcriptional activity in breast cancer cells. The sequence is that of Brefeldin A-inhibited guanine nucleotide-exchange protein 3 from Homo sapiens (Human).